A 323-amino-acid chain; its full sequence is tRNA uridine(34) hydroxylase (323 aa).

Positions 127-221 (QDENTVVLDA…YGQDPEVQGD (95 aa)) constitute a Rhodanese domain. Residue Cys-181 is the Cysteine persulfide intermediate of the active site.

This sequence belongs to the TrhO family.

It catalyses the reaction uridine(34) in tRNA + AH2 + O2 = 5-hydroxyuridine(34) in tRNA + A + H2O. Catalyzes oxygen-dependent 5-hydroxyuridine (ho5U) modification at position 34 in tRNAs. The protein is tRNA uridine(34) hydroxylase of Oceanobacillus iheyensis (strain DSM 14371 / CIP 107618 / JCM 11309 / KCTC 3954 / HTE831).